Consider the following 131-residue polypeptide: MSTSTKWLNEVKWDENGLVPVIAQEASTGDVLMFAWMNREALQRTAETGNAIYWSRSRRKLWHKGEESGHVQKVVELRIDCDNDVVLMKVEQVGGIACHTGRHSCFFQKYLADGRWETVEPVLKDPKDIYS.

Residue Asp-80 coordinates Mg(2+). Cys-81 contributes to the Zn(2+) binding site. 2 residues coordinate Mg(2+): Asp-82 and Asp-84. Zn(2+) contacts are provided by Cys-98 and Cys-105.

The protein belongs to the PRA-CH family. As to quaternary structure, homodimer. Requires Mg(2+) as cofactor. The cofactor is Zn(2+).

Its subcellular location is the cytoplasm. The catalysed reaction is 1-(5-phospho-beta-D-ribosyl)-5'-AMP + H2O = 1-(5-phospho-beta-D-ribosyl)-5-[(5-phospho-beta-D-ribosylamino)methylideneamino]imidazole-4-carboxamide. Its pathway is amino-acid biosynthesis; L-histidine biosynthesis; L-histidine from 5-phospho-alpha-D-ribose 1-diphosphate: step 3/9. Functionally, catalyzes the hydrolysis of the adenine ring of phosphoribosyl-AMP. The sequence is that of Phosphoribosyl-AMP cyclohydrolase from Azoarcus sp. (strain BH72).